A 237-amino-acid chain; its full sequence is Probable transcriptional regulatory protein MCAP_0598 (237 aa).

It belongs to the TACO1 family.

It is found in the cytoplasm. This chain is Probable transcriptional regulatory protein MCAP_0598, found in Mycoplasma capricolum subsp. capricolum (strain California kid / ATCC 27343 / NCTC 10154).